Reading from the N-terminus, the 154-residue chain is Ribonuclease H (154 aa).

One can recognise an RNase H type-1 domain in the interval Met1 to Leu142. Mg(2+) is bound by residues Asp10, Glu48, Asp70, and Asp134.

This sequence belongs to the RNase H family. As to quaternary structure, monomer. Mg(2+) is required as a cofactor.

The protein resides in the cytoplasm. The catalysed reaction is Endonucleolytic cleavage to 5'-phosphomonoester.. Functionally, endonuclease that specifically degrades the RNA of RNA-DNA hybrids. The sequence is that of Ribonuclease H from Tolumonas auensis (strain DSM 9187 / NBRC 110442 / TA 4).